Consider the following 375-residue polypeptide: PTS system fructose-specific EIIC component (375 aa).

One can recognise a PTS EIIC type-2 domain in the interval Val16 to Ala370. The next 10 helical transmembrane spans lie at Val24–Val44, Ile68–Ile88, Gly93–Ala113, Gly122–Ala142, Val160–Gly180, Ala203–Asn223, Val238–Leu258, Val279–Ala299, Val301–Val321, and Phe340–Ile360.

The protein localises to the cell membrane. The phosphoenolpyruvate-dependent sugar phosphotransferase system (sugar PTS), a major carbohydrate active transport system, catalyzes the phosphorylation of incoming sugar substrates concomitantly with their translocation across the cell membrane. The enzyme II PtfABC PTS system is involved in fructose transport. The protein is PTS system fructose-specific EIIC component of Haloferax volcanii (strain ATCC 29605 / DSM 3757 / JCM 8879 / NBRC 14742 / NCIMB 2012 / VKM B-1768 / DS2) (Halobacterium volcanii).